A 254-amino-acid polypeptide reads, in one-letter code: Probable protein ABIL5 (254 aa).

Residues 1 to 26 (MEVAEAGVDGVAGRRQQEEASGAAPF) form a disordered region.

It belongs to the ABI family. In terms of assembly, binds SCAR.

It localises to the cytoplasm. The protein localises to the cytoskeleton. Involved in regulation of actin and microtubule organization. Part of a WAVE complex that activates the Arp2/3 complex. This is Probable protein ABIL5 from Oryza sativa subsp. japonica (Rice).